The chain runs to 202 residues: uncharacterized protein (202 aa).

Lys-136 participates in a covalent cross-link: Isoglutamyl lysine isopeptide (Lys-Gln) (interchain with Q-Cter in protein Pup).

This is an uncharacterized protein from Mycobacterium tuberculosis (strain CDC 1551 / Oshkosh).